A 934-amino-acid chain; its full sequence is Aconitate hydratase A (934 aa).

A disordered region spans residues 398 to 454 (EPVDESLPAKRMDSEGAVQKEGEDVAGYNSSRAGHGESAAEGAAGRQSNPVVVSSPN). The span at 404-420 (LPAKRMDSEGAVQKEGE) shows a compositional bias: basic and acidic residues. Over residues 427–445 (SSRAGHGESAAEGAAGRQS) the composition is skewed to low complexity. The [4Fe-4S] cluster site is built by Cys-473, Cys-539, and Cys-542.

It belongs to the aconitase/IPM isomerase family. Monomer. [4Fe-4S] cluster is required as a cofactor.

The enzyme catalyses citrate = D-threo-isocitrate. The catalysed reaction is (2S,3R)-3-hydroxybutane-1,2,3-tricarboxylate = 2-methyl-cis-aconitate + H2O. It functions in the pathway carbohydrate metabolism; tricarboxylic acid cycle; isocitrate from oxaloacetate: step 2/2. It participates in organic acid metabolism; propanoate degradation. Its function is as follows. Involved in the catabolism of short chain fatty acids (SCFA) via the tricarboxylic acid (TCA)(acetyl degradation route) and probably via the 2-methylcitrate cycle I (propionate degradation route). Catalyzes the reversible isomerization of citrate to isocitrate via cis-aconitate. Could catalyze the hydration of 2-methyl-cis-aconitate to yield (2R,3S)-2-methylisocitrate. The apo form of AcnA functions as a RNA-binding regulatory protein. This is Aconitate hydratase A (acn) from Corynebacterium diphtheriae (strain ATCC 700971 / NCTC 13129 / Biotype gravis).